Here is a 385-residue protein sequence, read N- to C-terminus: Phosphate acyltransferase (385 aa).

A compositionally biased stretch (low complexity) spans 1 to 17 (MAAGTSIGTTPGGSTSP). Residues 1 to 28 (MAAGTSIGTTPGGSTSPETPPEHGLTGT) are disordered.

This sequence belongs to the PlsX family. Homodimer. Probably interacts with PlsY.

The protein resides in the cytoplasm. The enzyme catalyses a fatty acyl-[ACP] + phosphate = an acyl phosphate + holo-[ACP]. It functions in the pathway lipid metabolism; phospholipid metabolism. In terms of biological role, catalyzes the reversible formation of acyl-phosphate (acyl-PO(4)) from acyl-[acyl-carrier-protein] (acyl-ACP). This enzyme utilizes acyl-ACP as fatty acyl donor, but not acyl-CoA. This Dinoroseobacter shibae (strain DSM 16493 / NCIMB 14021 / DFL 12) protein is Phosphate acyltransferase.